Consider the following 271-residue polypeptide: Adenosylcobinamide-GDP ribazoletransferase (271 aa).

Helical transmembrane passes span 4–24 (FLLA…GMSM), 35–55 (YLQT…AYLT), 58–78 (FLPS…ITGL), 108–128 (SLGI…YASI), 135–155 (VLFF…IAEI), 192–212 (FVLG…IGYI), and 246–266 (IIVL…YGGL).

This sequence belongs to the CobS family. Mg(2+) serves as cofactor.

It localises to the cell membrane. The enzyme catalyses alpha-ribazole + adenosylcob(III)inamide-GDP = adenosylcob(III)alamin + GMP + H(+). It carries out the reaction alpha-ribazole 5'-phosphate + adenosylcob(III)inamide-GDP = adenosylcob(III)alamin 5'-phosphate + GMP + H(+). It functions in the pathway cofactor biosynthesis; adenosylcobalamin biosynthesis; adenosylcobalamin from cob(II)yrinate a,c-diamide: step 7/7. Joins adenosylcobinamide-GDP and alpha-ribazole to generate adenosylcobalamin (Ado-cobalamin). Also synthesizes adenosylcobalamin 5'-phosphate from adenosylcobinamide-GDP and alpha-ribazole 5'-phosphate. In Methanococcoides burtonii (strain DSM 6242 / NBRC 107633 / OCM 468 / ACE-M), this protein is Adenosylcobinamide-GDP ribazoletransferase.